A 691-amino-acid polypeptide reads, in one-letter code: DNA ligase (691 aa).

Residues 41 to 45 (DAEYD), 90 to 91 (SL), and glutamate 130 contribute to the NAD(+) site. Residue lysine 132 is the N6-AMP-lysine intermediate of the active site. NAD(+) contacts are provided by arginine 153, glutamate 190, lysine 307, and lysine 331. Residues cysteine 425, cysteine 428, cysteine 443, and cysteine 449 each coordinate Zn(2+). Positions 610–691 (APQGVLAGKT…MHTLLEGHAR (82 aa)) constitute a BRCT domain.

This sequence belongs to the NAD-dependent DNA ligase family. LigA subfamily. Requires Mg(2+) as cofactor. The cofactor is Mn(2+).

The catalysed reaction is NAD(+) + (deoxyribonucleotide)n-3'-hydroxyl + 5'-phospho-(deoxyribonucleotide)m = (deoxyribonucleotide)n+m + AMP + beta-nicotinamide D-nucleotide.. DNA ligase that catalyzes the formation of phosphodiester linkages between 5'-phosphoryl and 3'-hydroxyl groups in double-stranded DNA using NAD as a coenzyme and as the energy source for the reaction. It is essential for DNA replication and repair of damaged DNA. The protein is DNA ligase of Burkholderia pseudomallei (strain 1710b).